Here is a 342-residue protein sequence, read N- to C-terminus: Nucleoid-associated protein Sputcn32_2288 (342 aa).

The protein belongs to the YejK family.

Its subcellular location is the cytoplasm. The protein resides in the nucleoid. This Shewanella putrefaciens (strain CN-32 / ATCC BAA-453) protein is Nucleoid-associated protein Sputcn32_2288.